Here is a 247-residue protein sequence, read N- to C-terminus: MKAVILIPARLESSRLERKMLADLEGEPLIVRTWRQAMRSTLAERVVVATDSRDIASVLEERGAEVVMTSPSASCGTERIAEAARNIEGDVFVNLQGDEPLISPDTIDLVLSPFFAADPPDCSTLVFALRPDEREQIEDPHIVKALLDRKGNALYFSRSPVPFMRNNTPSLVFYRHVGMYAFGRDVLQQFAALPVSMLEAAESLEQLRLLENGFSIRCVITTLDQPGVNTAEDLELVRSILRKESRS.

This sequence belongs to the KdsB family.

It localises to the cytoplasm. The enzyme catalyses 3-deoxy-alpha-D-manno-oct-2-ulosonate + CTP = CMP-3-deoxy-beta-D-manno-octulosonate + diphosphate. It participates in nucleotide-sugar biosynthesis; CMP-3-deoxy-D-manno-octulosonate biosynthesis; CMP-3-deoxy-D-manno-octulosonate from 3-deoxy-D-manno-octulosonate and CTP: step 1/1. Its pathway is bacterial outer membrane biogenesis; lipopolysaccharide biosynthesis. Activates KDO (a required 8-carbon sugar) for incorporation into bacterial lipopolysaccharide in Gram-negative bacteria. This Chlorobium phaeovibrioides (strain DSM 265 / 1930) (Prosthecochloris vibrioformis (strain DSM 265)) protein is 3-deoxy-manno-octulosonate cytidylyltransferase.